A 2199-amino-acid chain; its full sequence is DNA polymerase epsilon catalytic subunit A (2199 aa).

Residues cysteine 2069, cysteine 2072, cysteine 2104, and cysteine 2107 each coordinate Zn(2+). A CysA-type zinc finger spans residues 2069–2107; sequence CKQCGVHQDFDLCLHEHLWPTRDDMGTLVFSDGWSCSSC. [4Fe-4S] cluster is bound by residues cysteine 2138, cysteine 2141, cysteine 2153, and cysteine 2155. Positions 2138 to 2155 match the CysB motif motif; it reads CSKCKTVKQWSLKERCSC.

The protein belongs to the DNA polymerase type-B family. In terms of assembly, heterotetramer. Consists of 4 subunits: pol2, dpb2, dpb3 and dpb4. The cofactor is [4Fe-4S] cluster.

Its subcellular location is the nucleus. It catalyses the reaction DNA(n) + a 2'-deoxyribonucleoside 5'-triphosphate = DNA(n+1) + diphosphate. DNA polymerase II participates in chromosomal DNA replication. This chain is DNA polymerase epsilon catalytic subunit A (pol2), found in Schizosaccharomyces pombe (strain 972 / ATCC 24843) (Fission yeast).